A 133-amino-acid chain; its full sequence is Phosphoribosyl-AMP cyclohydrolase (133 aa).

Residue Asp77 coordinates Mg(2+). Residue Cys78 participates in Zn(2+) binding. Residues Asp79 and Asp81 each contribute to the Mg(2+) site. Zn(2+)-binding residues include Cys95 and Cys102.

It belongs to the PRA-CH family. Homodimer. Mg(2+) is required as a cofactor. Zn(2+) serves as cofactor.

The protein resides in the cytoplasm. The catalysed reaction is 1-(5-phospho-beta-D-ribosyl)-5'-AMP + H2O = 1-(5-phospho-beta-D-ribosyl)-5-[(5-phospho-beta-D-ribosylamino)methylideneamino]imidazole-4-carboxamide. Its pathway is amino-acid biosynthesis; L-histidine biosynthesis; L-histidine from 5-phospho-alpha-D-ribose 1-diphosphate: step 3/9. Its function is as follows. Catalyzes the hydrolysis of the adenine ring of phosphoribosyl-AMP. The polypeptide is Phosphoribosyl-AMP cyclohydrolase (Azotobacter vinelandii (strain DJ / ATCC BAA-1303)).